The chain runs to 249 residues: Triosephosphate isomerase (249 aa).

9–11 (NWK) is a substrate binding site. His95 acts as the Electrophile in catalysis. Catalysis depends on Glu166, which acts as the Proton acceptor. Substrate contacts are provided by residues Gly172, Ser211, and 232-233 (GG).

It belongs to the triosephosphate isomerase family. Homodimer.

Its subcellular location is the cytoplasm. The enzyme catalyses D-glyceraldehyde 3-phosphate = dihydroxyacetone phosphate. The protein operates within carbohydrate biosynthesis; gluconeogenesis. Its pathway is carbohydrate degradation; glycolysis; D-glyceraldehyde 3-phosphate from glycerone phosphate: step 1/1. In terms of biological role, involved in the gluconeogenesis. Catalyzes stereospecifically the conversion of dihydroxyacetone phosphate (DHAP) to D-glyceraldehyde-3-phosphate (G3P). The polypeptide is Triosephosphate isomerase (Legionella pneumophila (strain Lens)).